Reading from the N-terminus, the 295-residue chain is Light-independent protochlorophyllide reductase iron-sulfur ATP-binding protein (295 aa).

Residues 39-44 (GIGKST) and Lys68 contribute to the ATP site. Ser43 serves as a coordination point for Mg(2+). Residues Cys124 and Cys158 each coordinate [4Fe-4S] cluster. 209–210 (NR) serves as a coordination point for ATP.

The protein belongs to the NifH/BchL/ChlL family. Homodimer. Protochlorophyllide reductase is composed of three subunits; ChlL, ChlN and ChlB. It depends on [4Fe-4S] cluster as a cofactor.

The enzyme catalyses chlorophyllide a + oxidized 2[4Fe-4S]-[ferredoxin] + 2 ADP + 2 phosphate = protochlorophyllide a + reduced 2[4Fe-4S]-[ferredoxin] + 2 ATP + 2 H2O. It functions in the pathway porphyrin-containing compound metabolism; chlorophyll biosynthesis (light-independent). Its function is as follows. Component of the dark-operative protochlorophyllide reductase (DPOR) that uses Mg-ATP and reduced ferredoxin to reduce ring D of protochlorophyllide (Pchlide) to form chlorophyllide a (Chlide). This reaction is light-independent. The L component serves as a unique electron donor to the NB-component of the complex, and binds Mg-ATP. The polypeptide is Light-independent protochlorophyllide reductase iron-sulfur ATP-binding protein (Prochlorococcus marinus (strain MIT 9312)).